The chain runs to 109 residues: uncharacterized protein (109 aa).

This is an uncharacterized protein from Mycobacterium tuberculosis (strain CDC 1551 / Oshkosh).